The primary structure comprises 617 residues: Pyrophosphate--fructose 6-phosphate 1-phosphotransferase subunit alpha 2 (617 aa).

It belongs to the phosphofructokinase type A (PFKA) family. PPi-dependent PFK group II subfamily. Clade 'Long' sub-subfamily. As to quaternary structure, tetramer of two alpha (regulatory) and two beta (catalytic) chains. As to expression, expressed in roots and specific parts such as the trichomes of leaves, cotyledon veins, as well as in stamen and gynoecium of flowers.

The protein resides in the cytoplasm. The protein operates within carbohydrate degradation; glycolysis; D-glyceraldehyde 3-phosphate and glycerone phosphate from D-glucose: step 3/4. With respect to regulation, allosterically activated by fructose 2,6-bisphosphate. Its function is as follows. Regulatory subunit of pyrophosphate--fructose 6-phosphate 1-phosphotransferase. This is Pyrophosphate--fructose 6-phosphate 1-phosphotransferase subunit alpha 2 from Arabidopsis thaliana (Mouse-ear cress).